We begin with the raw amino-acid sequence, 357 residues long: MVTVARRPVCPVTLTPGDPALASVRDLVDAWSAHDALAELVTMFGGAFPQTDHLEARLASLDKFSTAWDYRARARAARALHGEPVRCQDSGGGARWLIPRLDLPAKKRDAIVGLAQQLGLTLESTPQGTTFDHVLVIGTGRHSNLIRARWARELAKGRQVGHIVLAAASRRLLPSEDDAVAVCAPGARTEFELLAAAARDAFGLDVHPAVRYVRQRDDNPHRDSMVWRFAADTNDLGVPITLLEAPSPEPDSSRATSADTFTFTAHTLGMQDSTCLLVTGQPFVPYQNFDALRTLALPFGIQVETVGFGIDRYDGLGELDQQHPAKLLQEVRSTIRAARALLERIEAGERMATDPRR.

This is an uncharacterized protein from Mycobacterium bovis (strain ATCC BAA-935 / AF2122/97).